The chain runs to 247 residues: Chaperone protein AfaB (247 aa).

The N-terminal stretch at 1 to 29 is a signal peptide; sequence MKMRAVAVFTGMLTGVLSVAGLLSAGAYA.

The protein belongs to the periplasmic pilus chaperone family.

The protein localises to the periplasm. Its function is as follows. Involved in the biogenesis of the AFA-III afimbrial adhesin. In Escherichia coli, this protein is Chaperone protein AfaB (afaB).